We begin with the raw amino-acid sequence, 267 residues long: Cyclin-C (267 aa).

Positions 48-151 (IQVLGEQLKL…LLENLDCCLI (104 aa)) constitute a Cyclin N-terminal domain.

The protein belongs to the cyclin family. Cyclin C subfamily. As to quaternary structure, component of the Cdk8 module of the Mediator complex.

It localises to the nucleus. In terms of biological role, component of the Mediator complex, a coactivator involved in regulated gene transcription of nearly all RNA polymerase II-dependent genes. Mediator functions as a bridge to convey information from gene-specific regulatory proteins to the basal RNA polymerase II transcription machinery. Mediator is recruited to promoters by direct interactions with regulatory proteins and serves as a scaffold for the assembly of a functional preinitiation complex with RNA polymerase II and the general transcription factors. Binds to and activates cyclin-dependent kinase Cdk8 that phosphorylates the CTD (C-terminal domain) of the large subunit of RNA polymerase II (RNAp II), which may inhibit the formation of a transcription initiation complex. This chain is Cyclin-C (CycC), found in Drosophila pseudoobscura pseudoobscura (Fruit fly).